We begin with the raw amino-acid sequence, 445 residues long: UPF0210 protein LACR_1020 (445 aa).

It belongs to the UPF0210 family. Homodimer.

The polypeptide is UPF0210 protein LACR_1020 (Lactococcus lactis subsp. cremoris (strain SK11)).